We begin with the raw amino-acid sequence, 361 residues long: Peptide chain release factor 1 (361 aa).

N5-methylglutamine is present on Q237.

It belongs to the prokaryotic/mitochondrial release factor family. In terms of processing, methylated by PrmC. Methylation increases the termination efficiency of RF1.

The protein resides in the cytoplasm. In terms of biological role, peptide chain release factor 1 directs the termination of translation in response to the peptide chain termination codons UAG and UAA. This is Peptide chain release factor 1 from Chromohalobacter salexigens (strain ATCC BAA-138 / DSM 3043 / CIP 106854 / NCIMB 13768 / 1H11).